Consider the following 491-residue polypeptide: Aspartyl/glutamyl-tRNA(Asn/Gln) amidotransferase subunit B (491 aa).

It belongs to the GatB/GatE family. GatB subfamily. Heterotrimer of A, B and C subunits.

The enzyme catalyses L-glutamyl-tRNA(Gln) + L-glutamine + ATP + H2O = L-glutaminyl-tRNA(Gln) + L-glutamate + ADP + phosphate + H(+). The catalysed reaction is L-aspartyl-tRNA(Asn) + L-glutamine + ATP + H2O = L-asparaginyl-tRNA(Asn) + L-glutamate + ADP + phosphate + 2 H(+). Allows the formation of correctly charged Asn-tRNA(Asn) or Gln-tRNA(Gln) through the transamidation of misacylated Asp-tRNA(Asn) or Glu-tRNA(Gln) in organisms which lack either or both of asparaginyl-tRNA or glutaminyl-tRNA synthetases. The reaction takes place in the presence of glutamine and ATP through an activated phospho-Asp-tRNA(Asn) or phospho-Glu-tRNA(Gln). The sequence is that of Aspartyl/glutamyl-tRNA(Asn/Gln) amidotransferase subunit B from Paraburkholderia xenovorans (strain LB400).